An 855-amino-acid polypeptide reads, in one-letter code: Pre-mRNA-splicing factor SYF1 (855 aa).

HAT repeat units follow at residues 15-47, 48-80, 90-122, 124-158, 160-192, 198-230, 235-268, 270-305, and 369-407; these read LVFEEEDLPYEEEIMRNQFSVKCWLRYIEFKQG, APKPRLNQLYERALKLLPCSYKLWYRYLKARRA, PAYEDVNNCHERAFVFMHKMPRLWLDYCQFLMD, GRVTHTRRTFDRALRALPITQHSRIWPLYLRFLRS, PLPETAVRGYRRFLKLSPESAEEYIEYLKSSDR, QRLATVVNDERFVSKAGKSNYQLWHELCDLISQ, VQSLNVDAIIRGGLTRFTDQLGKLWCSLADYYIR, GHFEKARDVYEEAIRTVMTVRDFTQVFDSYAQFEES, and GRPREIINTYTEAVQTVDPFKATGKPHTLWVAFAKFYED. Lys-420 is subject to N6-acetyllysine. HAT repeat units lie at residues 498 to 530, 532 to 566, 571 to 605, 643 to 677, and 679 to 713; these read GTFQSTKAVYDRILDLRIATPQIVINYAMFLEE, KYFEESFKAYERGISLFKWPNVSDIWSTYLTKFIS, RKLERARDLFEQALDGCPPKYAKTLYLLYAQLEEE, YGVTHTRGIYQKAIEVLSDEHAREMCLRFADMECK, and GEIDRARAIYSFCSQICDPRTTGAFWQTWKDFEVR. The disordered stretch occupies residues 808–855; the sequence is AELAQQANPEEIQLGEDEDEDEMDLEPNEVRLEQQSVPAAVFGSLKED. A compositionally biased stretch (acidic residues) spans 820–834; the sequence is QLGEDEDEDEMDLEP. Ser-851 is modified (phosphoserine).

The protein belongs to the crooked-neck family. As to quaternary structure, associates with RNA polymerase II, the TCR-specific proteins CKN1/CSA and ERCC6/CSB, and XPA. Identified in the spliceosome C complex. Component of the XAB2 complex, a multimeric protein complex composed of XAB2, PRPF19, AQR, ZNF830, ISY1, and PPIE. Identified in a pentameric intron-binding (IB) complex composed of AQR, XAB2, ISY1, ZNF830 and PPIE that is incorporated into the spliceosome as a preassembled complex. The IB complex does not contain PRPF19.

It is found in the nucleus. Functionally, involved in pre-mRNA splicing as component of the spliceosome. Involved in transcription-coupled repair (TCR), transcription and pre-mRNA splicing. The chain is Pre-mRNA-splicing factor SYF1 (Xab2) from Rattus norvegicus (Rat).